Here is a 439-residue protein sequence, read N- to C-terminus: MNIFEHSIKNVDKGNVVAIVGTQWGDEGKGKIIDILSKYSDITCRFNGGGNAGHTICVGDKKHALHLLPCGVLYENNINILGNCMVIHLKTLMKEINNLGNNILDRIYISEKAHILFDIHQEIDAIQEIRKSKDGNAIGTTKKGIGPCYSTKASRIGIRMGSLRNFENFKKLYIKLIDNLMDLYNIKDYNKEEELNEFYTYHLIFKDKIINIISYINKSIDSKKYILIEGANAAMLDIDLGTYPFVTSSSTTLGGIFSGLGIHHKKLNLVVGVVKSYLTRVGSGPFLTEQCNEIGEYLTKKGFEYGTTTKRPRRCGWLDLPMIFYVKYINCIDIINLTKLDVLSGLKEIYICIDYKNKTTGELLERGNYPLEYEQLREYEPVYEKFEGWDEDITNCIEFYELPENAKKYVLAIESYIKTPIVWIGVGPTRNNTITRKFD.

Residues 25 to 31, 53 to 55, and K62 contribute to the GTP site; these read GDEGKGK and GHT. Catalysis depends on D26, which acts as the Proton acceptor. Residues D26 and G53 each coordinate Mg(2+). Residues 26-29 and 51-54 each bind IMP; these read DEGK and NAGH. Residue H54 is the Proton donor of the active site. Positions 141, 155, 232, and 247 each coordinate IMP. Residue T307 coordinates GTP. Position 307-313 (307-313) interacts with substrate; sequence TTTKRPR. R311 is an IMP binding site. GTP contacts are provided by residues R313, 339 to 341, and 425 to 427; these read KLD and GVG.

This sequence belongs to the adenylosuccinate synthetase family. As to quaternary structure, homodimer. It depends on Mg(2+) as a cofactor.

Its subcellular location is the cytoplasm. It carries out the reaction IMP + L-aspartate + GTP = N(6)-(1,2-dicarboxyethyl)-AMP + GDP + phosphate + 2 H(+). The protein operates within purine metabolism; AMP biosynthesis via de novo pathway; AMP from IMP: step 1/2. Its function is as follows. Plays an important role in the salvage pathway for purine nucleotide biosynthesis. Catalyzes the first commited step in the biosynthesis of AMP from IMP. This chain is Adenylosuccinate synthetase (ADSS), found in Plasmodium berghei (strain Anka).